The primary structure comprises 231 residues: UPF0653 protein C607.02c (231 aa).

Disordered stretches follow at residues 1–33, 47–68, 93–132, and 147–178; these read MPTKTKKRSVLEAERKKIGLDHAPKEDESVDDN, YHESKKKEIKKGNLKNKKKKDY, SFKSGPSKIDEFTDKKEKKKIAKRKEKRERDWNEIEENFE, and IESRKKRKNSPDPWANLQTKPSFGETVQAPPE. Positions 9–27 are enriched in basic and acidic residues; that stretch reads SVLEAERKKIGLDHAPKED. Composition is skewed to basic residues over residues 53 to 67 and 109 to 119; these read KEIKKGNLKNKKKKD and EKKKIAKRKEK.

It belongs to the UPF0653 family.

The protein resides in the nucleus. The protein localises to the nucleolus. The protein is UPF0653 protein C607.02c of Schizosaccharomyces pombe (strain 972 / ATCC 24843) (Fission yeast).